The chain runs to 547 residues: CAP-Gly domain-containing linker protein 3 (547 aa).

Residues 1–49 are disordered; sequence MTKTDPAPMAPPPRGEEEEEEEEDEPVPEAPSPTQERRQKPVVHPSAPA. The segment covering 16-27 has biased composition (acidic residues); that stretch reads EEEEEEEEDEPV. 3 ANK repeats span residues 117-158, 160-191, and 197-229; these read TDMT…LRSR, TNMNALHYAAYFDVPDLVRVLLKGARPRVVNS, and NHGSALHIAASSLCLGAAKCLLEHGANPALRNR. The 43-residue stretch at 314–356 folds into the CAP-Gly 1 domain; that stretch reads GTTEFASGQWVGVELDEPEGKNDGSVGGVRYFICPPKQGLFAS. The segment at 365 to 413 is disordered; sequence DAPPSSVTSTPRTPRMDFSRVTGKGRREHKGKKKTPSSPSLGSLQQRDG. Positions 367–377 are enriched in low complexity; it reads PPSSVTSTPRT. Phosphothreonine is present on T374. Residues 387 to 399 are compositionally biased toward basic residues; that stretch reads GKGRREHKGKKKT. Polar residues predominate over residues 400 to 410; the sequence is PSSPSLGSLQQ. Residue S401 is modified to Phosphoserine. A CAP-Gly 2 domain is found at 436–478; it reads GKTDFAPGYWYGIELDQPTGKHDGSVFGVRYFTCPPRHGVFAP. The goLD stretch occupies residues 488–547; that stretch reads STDSPGDSVGAKKVHQVTMTQPKRTFTTVRTPKDIASENSISRLLFCCWFPWMLRAEMQS. 2 S-palmitoyl cysteine lipidation sites follow: C534 and C535.

In terms of assembly, homodimer. Interacts with AKT1 and AKT2; when AKT1 and AKT2 are phosphorylated and activated, affinity is higher for AKT2. Interacts with ZDHHC13 (via ANK repeats). Interacts with ZDHHC17 (via ANK repeats). Post-translationally, palmitoylation by ZDHHC17 regulates association with the plasma membrane.

The protein resides in the cell membrane. It is found in the cytoplasm. Its subcellular location is the golgi apparatus. It localises to the golgi stack. In terms of biological role, functions as a cytoplasmic linker protein. Involved in TGN-endosome dynamics. May modulate the cellular compartmentalization of AKT kinase family and promote its cell membrane localization, thereby playing a role in glucose transport in adipocytes. The polypeptide is CAP-Gly domain-containing linker protein 3 (CLIP3) (Homo sapiens (Human)).